The sequence spans 175 residues: Large ribosomal subunit protein uL10 (175 aa).

It belongs to the universal ribosomal protein uL10 family. Part of the ribosomal stalk of the 50S ribosomal subunit. The N-terminus interacts with L11 and the large rRNA to form the base of the stalk. The C-terminus forms an elongated spine to which L12 dimers bind in a sequential fashion forming a multimeric L10(L12)X complex.

Forms part of the ribosomal stalk, playing a central role in the interaction of the ribosome with GTP-bound translation factors. The polypeptide is Large ribosomal subunit protein uL10 (Xylella fastidiosa (strain M12)).